We begin with the raw amino-acid sequence, 500 residues long: 4-alpha-glucanotransferase (500 aa).

The protein belongs to the disproportionating enzyme family.

It is found in the cytoplasm. The enzyme catalyses Transfers a segment of a (1-&gt;4)-alpha-D-glucan to a new position in an acceptor, which may be glucose or a (1-&gt;4)-alpha-D-glucan.. In Thermus thermophilus, this protein is 4-alpha-glucanotransferase (malQ).